A 125-amino-acid chain; its full sequence is Acidic phospholipase A2 5 (125 aa).

S1 is a signal peptide. A propeptide spanning residues 2-7 is cleaved from the precursor; sequence NRPMPL. 8 disulfides stabilise this stretch: C18-C77, C33-C124, C35-C50, C37-C54, C49-C105, C56-C98, C66-C91, and C84-C96. F28 serves as a coordination point for N-acetyl-beta-D-glucosamine. D30 is a binding site for Zn(2+). Positions 34 and 36 each coordinate Ca(2+). N-acetyl-beta-D-glucosamine-binding residues include H53 and K69. The active site involves H53. E76 lines the Zn(2+) pocket. D99 is a catalytic residue. N117 provides a ligand contact to Zn(2+).

As to quaternary structure, heterodimer formed between isoform 5 and isoform 6 in presence of zinc ion and monomer in absence of zinc ion. Requires Ca(2+) as cofactor. As to expression, expressed by the venom gland.

The protein resides in the secreted. The enzyme catalyses a 1,2-diacyl-sn-glycero-3-phosphocholine + H2O = a 1-acyl-sn-glycero-3-phosphocholine + a fatty acid + H(+). In terms of biological role, PLA2 catalyzes the calcium-dependent hydrolysis of the 2-acyl groups in 3-sn-phosphoglycerides. In Naja sagittifera (Andaman cobra), this protein is Acidic phospholipase A2 5.